The primary structure comprises 276 residues: Large ribosomal subunit protein uL2 (276 aa).

Disordered stretches follow at residues 1–20 (MGIK…TTND) and 219–276 (TVRG…RRKK). Over residues 7-20 (NPTTNGRRNMTTND) the composition is skewed to polar residues.

The protein belongs to the universal ribosomal protein uL2 family. Part of the 50S ribosomal subunit. Forms a bridge to the 30S subunit in the 70S ribosome.

Its function is as follows. One of the primary rRNA binding proteins. Required for association of the 30S and 50S subunits to form the 70S ribosome, for tRNA binding and peptide bond formation. It has been suggested to have peptidyltransferase activity; this is somewhat controversial. Makes several contacts with the 16S rRNA in the 70S ribosome. The polypeptide is Large ribosomal subunit protein uL2 (Bacillus mycoides (strain KBAB4) (Bacillus weihenstephanensis)).